The chain runs to 456 residues: tRNA modification GTPase MnmE (456 aa).

Residues R24, E81, and K120 each coordinate (6S)-5-formyl-5,6,7,8-tetrahydrofolate. Residues 216-379 enclose the TrmE-type G domain; that stretch reads GMTVVIAGRP…LREHLKACMG (164 aa). A K(+)-binding site is contributed by N226. Residues 226–231, 245–251, 270–273, 335–338, and 359–361 contribute to the GTP site; these read NAGKSS, TEIAGTT, DTAG, NKAD, and SAR. S230 is a Mg(2+) binding site. 3 residues coordinate K(+): T245, I247, and T250. Residue T251 participates in Mg(2+) binding. K456 contacts (6S)-5-formyl-5,6,7,8-tetrahydrofolate.

The protein belongs to the TRAFAC class TrmE-Era-EngA-EngB-Septin-like GTPase superfamily. TrmE GTPase family. Homodimer. Heterotetramer of two MnmE and two MnmG subunits. The cofactor is K(+).

It localises to the cytoplasm. In terms of biological role, exhibits a very high intrinsic GTPase hydrolysis rate. Involved in the addition of a carboxymethylaminomethyl (cmnm) group at the wobble position (U34) of certain tRNAs, forming tRNA-cmnm(5)s(2)U34. The polypeptide is tRNA modification GTPase MnmE (Pseudomonas syringae pv. syringae (strain B728a)).